We begin with the raw amino-acid sequence, 290 residues long: HTH-type transcriptional regulator BsdA (290 aa).

In terms of domain architecture, HTH lysR-type spans Met1–Thr59. A DNA-binding region (H-T-H motif) is located at residues Ile18–Lys37.

Belongs to the LysR transcriptional regulatory family.

Functionally, could be a positive regulator of bsdBCD expression in response to salicylic acid. In Bacillus subtilis (strain 168), this protein is HTH-type transcriptional regulator BsdA (bsdA).